A 168-amino-acid polypeptide reads, in one-letter code: Large ribosomal subunit protein bL17 (168 aa).

The interval 124–168 (QATGEAEAATKRAAKDAEGSAEVSEAKVDTTKADDEAAAEESKDA) is disordered. Over residues 131–168 (AATKRAAKDAEGSAEVSEAKVDTTKADDEAAAEESKDA) the composition is skewed to basic and acidic residues.

It belongs to the bacterial ribosomal protein bL17 family. Part of the 50S ribosomal subunit. Contacts protein L32.

The protein is Large ribosomal subunit protein bL17 of Streptomyces coelicolor (strain ATCC BAA-471 / A3(2) / M145).